The primary structure comprises 421 residues: Probable tRNA N6-adenosine threonylcarbamoyltransferase, mitochondrial (421 aa).

The transit peptide at 1–22 (MNIPKILNNNLVLKRIFCRNYS) directs the protein to the mitochondrion. A divalent metal cation is bound by residues H133 and H137. Substrate contacts are provided by residues 156–160 (LLSGG), D189, G208, E212, 308–309 (AN), and T336. D337 serves as a coordination point for a divalent metal cation.

This sequence belongs to the KAE1 / TsaD family. As to quaternary structure, homodimer. Requires a divalent metal cation as cofactor.

The protein resides in the mitochondrion. It carries out the reaction L-threonylcarbamoyladenylate + adenosine(37) in tRNA = N(6)-L-threonylcarbamoyladenosine(37) in tRNA + AMP + H(+). Functionally, required for the formation of a threonylcarbamoyl group on adenosine at position 37 (t(6)A37) in mitochondrial tRNAs that read codons beginning with adenine. Probably involved in the transfer of the threonylcarbamoyl moiety of threonylcarbamoyl-AMP (TC-AMP) to the N6 group of A37. Involved in mitochondrial genome maintenance. This chain is Probable tRNA N6-adenosine threonylcarbamoyltransferase, mitochondrial, found in Caenorhabditis elegans.